The chain runs to 1801 residues: Focadhesin (1801 aa).

K819 carries the N6-acetyllysine modification.

As to quaternary structure, interacts with VCL. In terms of tissue distribution, ubiquitous. High expression in brain followed by testis, muscle, pancreas, heart, ovary, small intestine, placenta, prostate, thymus, kidney, colon, liver, lung, spleen and leukocytes. Expression is reduced in most glioblastomas and all glioblastoma cell lines.

It is found in the cell junction. The protein resides in the focal adhesion. Its subcellular location is the cytoplasm. The protein localises to the cytosol. In terms of biological role, required for the maintenance of SKIC2 and SKIC3 proteostatic levels in the liver. May be involved in the regulation of RNA degradation by the exosome complex. Potential tumor suppressor in gliomas. The polypeptide is Focadhesin (Homo sapiens (Human)).